Consider the following 182-residue polypeptide: RFKKIRRLGALPGLTSKRPRSGSDLKNQLRSGKRSQYRIRLEEKQKLRFHYGLTERQLLKYVHIAGKAKGSTGQVLLQLLEMRLDNILFRLGMASTIPGARQLVNHRHILVNGRIVDIPSYRCKPRDIITTKDKERSKVLIQNYIASSPHEELPNHLTIDPLQYKGLVNQIIDSKWVGLKIN.

Residues 82–143 enclose the S4 RNA-binding domain; sequence MRLDNILFRL…KERSKVLIQN (62 aa).

Belongs to the universal ribosomal protein uS4 family. In terms of assembly, part of the 30S ribosomal subunit. Contacts protein S5. The interaction surface between S4 and S5 is involved in control of translational fidelity.

Its subcellular location is the plastid. The protein resides in the chloroplast. Its function is as follows. One of the primary rRNA binding proteins, it binds directly to 16S rRNA where it nucleates assembly of the body of the 30S subunit. With S5 and S12 plays an important role in translational accuracy. The sequence is that of Small ribosomal subunit protein uS4c (rps4) from Neomarica sp. (strain Lejeune 1997).